We begin with the raw amino-acid sequence, 78 residues long: CDC42 small effector protein 1 (78 aa).

Residues Cys10 and Cys11 are each lipidated (S-palmitoyl cysteine). The CRIB domain maps to 30-43 (IGEPMNFVHLTHIG).

Belongs to the CDC42SE/SPEC family.

The protein localises to the cytoplasm. The protein resides in the cytoskeleton. It localises to the cell membrane. Probably involved in the organization of the actin cytoskeleton by acting downstream of CDC42, inducing actin filament assembly. The protein is CDC42 small effector protein 1 (CDC42SE1) of Gallus gallus (Chicken).